Consider the following 331-residue polypeptide: PHD finger protein 11 (331 aa).

Residues 42 to 78 (KRTCALCPKDVEYNVLYFAQSENIAAHENCLLYSSGL) form a C2HC pre-PHD-type zinc finger. The PHD-type zinc-finger motif lies at 108–160 (LKCKFCHKRGATVGCDLKNCNKNYHFFCAKKDDAVPQSDGVRGIYKLLCQQHA).

Interacts with BRCA1 and RELA. As to expression, highly expressed in T and B-cells, as well as natural killer and mature dendritic cells. Expressed at higher levels in Th1 as compared to Th2 cells. Expressed at low levels in all normal tissues tested, including lung, testis, small intestine, breast, liver and placenta.

Its subcellular location is the nucleus. Functionally, positive regulator of Th1-type cytokine gene expression. The chain is PHD finger protein 11 (PHF11) from Homo sapiens (Human).